Here is a 339-residue protein sequence, read N- to C-terminus: Dihydroorotase (339 aa).

The Zn(2+) site is built by His12 and His14. Residues 14 to 16 (HVR) and Asn40 each bind substrate. The Zn(2+) site is built by Lys94, His133, His167, and Asp239. Residue Lys94 is modified to N6-carboxylysine. His133 serves as a coordination point for substrate. Asp239 is an active-site residue. Residues His243 and Ala255 each contribute to the substrate site.

It belongs to the metallo-dependent hydrolases superfamily. DHOase family. Class II DHOase subfamily. As to quaternary structure, homodimer. It depends on Zn(2+) as a cofactor.

It carries out the reaction (S)-dihydroorotate + H2O = N-carbamoyl-L-aspartate + H(+). Its pathway is pyrimidine metabolism; UMP biosynthesis via de novo pathway; (S)-dihydroorotate from bicarbonate: step 3/3. Catalyzes the reversible cyclization of carbamoyl aspartate to dihydroorotate. This Helicobacter acinonychis (strain Sheeba) protein is Dihydroorotase.